The primary structure comprises 465 residues: UDP-glucose:undecaprenyl-phosphate glucose-1-phosphate transferase (465 aa).

The next 5 helical transmembrane spans lie at 23-43 (FSDI…NDYF), 46-66 (LHYV…GGIT), 82-102 (ILIL…VTLF), 105-125 (FDLT…GFVV), and 280-300 (IIVS…IATA).

This sequence belongs to the bacterial sugar transferase family.

It localises to the cell inner membrane. It carries out the reaction di-trans,octa-cis-undecaprenyl phosphate + UDP-alpha-D-glucose = alpha-D-glucosyl di-trans,octa-cis-undecaprenyl diphosphate + UMP. It functions in the pathway capsule biogenesis; capsule polysaccharide biosynthesis. In terms of biological role, is likely the initiating enzyme for the K2 capsular polysaccharide synthesis. Catalyzes the transfer of the glucose-1-phosphate moiety from UDP-Glc onto the carrier lipid undecaprenyl phosphate (C55-P), forming a phosphoanhydride bond yielding to glucosyl-pyrophosphoryl-undecaprenol (Glc-PP-C55). The sequence is that of UDP-glucose:undecaprenyl-phosphate glucose-1-phosphate transferase from Klebsiella pneumoniae.